Consider the following 527-residue polypeptide: Estrogen receptor beta (527 aa).

The modulating stretch occupies residues 1–145 (MDVKNSPSSL…SPSSKRDAHF (145 aa)). Phosphoserine; by MAPK occurs at positions 84 and 102. 2 consecutive NR C4-type zinc fingers follow at residues 146-166 (CAVC…CEGC) and 182-206 (CPAT…LRKC). The nuclear receptor DNA-binding region spans 146 to 211 (CAVCSDYASG…RLRKCYEVGM (66 aa)). An NR LBD domain is found at 261 to 495 (SPEQLVLTLL…DLLLEMLNAH (235 aa)). Residues 505 to 527 (TRSERNLAEDSESKEGSQKPQAQ) are disordered. The span at 506-521 (RSERNLAEDSESKEGS) shows a compositional bias: basic and acidic residues.

It belongs to the nuclear hormone receptor family. NR3 subfamily. In terms of assembly, binds DNA as a homodimer. Can form a heterodimer with ESR1. Interacts with NCOA1, NCOA3, NCOA5 and NCOA6 coactivators, leading to a strong increase of transcription of target genes. Interacts with UBE1C and AKAP13. Interacts with DNTTIP2. Interacts with CCDC62 in the presence of estradiol/E2; this interaction seems to enhance the transcription of target genes. Interacts with DNAAF4. Interacts with PRMT2. Interacts with CCAR2 (via N-terminus) in a ligand-independent manner. Interacts with RBM39, in the presence of estradiol (E2). Interacts with STUB1/CHIP. Phosphorylation at Ser-84 and Ser-102 recruits NCOA1.

It is found in the nucleus. Its function is as follows. Nuclear hormone receptor. Binds estrogens with an affinity similar to that of ESR1/ER-alpha, and activates expression of reporter genes containing estrogen response elements (ERE) in an estrogen-dependent manner. This chain is Estrogen receptor beta (ESR2), found in Ovis aries (Sheep).